A 152-amino-acid polypeptide reads, in one-letter code: Lipoprotein signal peptidase (152 aa).

The next 3 membrane-spanning stretches (helical) occupy residues 5–25 (LFVLSLILLVALDQLSKFWIV), 61–81 (WFFVVITVLVIGYAIYYLATH), and 84–104 (LNIWKQLALLLIISGGIGNFI). Catalysis depends on residues Asp-114 and Asp-130. The chain crosses the membrane as a helical span at residues 125 to 145 (IFNVADSYLTVGVILLVICLW).

This sequence belongs to the peptidase A8 family.

Its subcellular location is the cell membrane. The catalysed reaction is Release of signal peptides from bacterial membrane prolipoproteins. Hydrolyzes -Xaa-Yaa-Zaa-|-(S,diacylglyceryl)Cys-, in which Xaa is hydrophobic (preferably Leu), and Yaa (Ala or Ser) and Zaa (Gly or Ala) have small, neutral side chains.. Its pathway is protein modification; lipoprotein biosynthesis (signal peptide cleavage). Functionally, this protein specifically catalyzes the removal of signal peptides from prolipoproteins. This Streptococcus pyogenes serotype M2 (strain MGAS10270) protein is Lipoprotein signal peptidase.